We begin with the raw amino-acid sequence, 166 residues long: Sec-independent protein translocase protein TatB (166 aa).

A helical transmembrane segment spans residues 1 to 21 (MIDIAFSKLAIIGVAALVFIG). A disordered region spans residues 85–146 (DSSLHSAWDE…SGQKSRVISG (62 aa)).

Belongs to the TatB family. As to quaternary structure, the Tat system comprises two distinct complexes: a TatABC complex, containing multiple copies of TatA, TatB and TatC subunits, and a separate TatA complex, containing only TatA subunits. Substrates initially bind to the TatABC complex, which probably triggers association of the separate TatA complex to form the active translocon.

The protein resides in the cell inner membrane. Functionally, part of the twin-arginine translocation (Tat) system that transports large folded proteins containing a characteristic twin-arginine motif in their signal peptide across membranes. Together with TatC, TatB is part of a receptor directly interacting with Tat signal peptides. TatB may form an oligomeric binding site that transiently accommodates folded Tat precursor proteins before their translocation. In Herminiimonas arsenicoxydans, this protein is Sec-independent protein translocase protein TatB.